We begin with the raw amino-acid sequence, 500 residues long: MASVLLTRRLACSFRHNHRLLVPGWRHISQAAAKVDVEFDYDGPLMKTEVPGPRSRELMKQLNIIQNAEAVHFFCNYEESRGNYLVDVDGNRMLDLYSQISSIPIGYSHPALVKLVQQPQNVSTFINRPALGILPPENFVEKLRESLLSVAPKGMSQLITMACGSCSNENAFKTIFMWYRSKERGQSAFSKEELETCMINQAPGCPDYSILSFMGAFHGRTMGCLATTHSKAIHKIDIPSFDWPIAPFPRLKYPLEEFVKENQQEEARCLEEVEDLIVKYRKKKKTVAGIIVEPIQSEGGDNHASDDFFRKLRDISRKHGCAFLVDEVQTGGGSTGKFWAHEHWGLDDPADVMTFSKKMMTGGFFHKEEFRPNAPYRIFNTWLGDPSKNLLLAEVINIIKREDLLSNAAHAGKVLLTGLLDLQARYPQFISRVRGRGTFCSFDTPDESIRNKLISIARNKGVMLGGCGDKSIRFRPTLVFRDHHAHLFLNIFSDILADFK.

A mitochondrion-targeting transit peptide spans methionine 1–isoleucine 28. Position 163 (cysteine 163) interacts with [2Fe-2S] cluster. Glycine 164–serine 165 serves as a coordination point for pyridoxal 5'-phosphate. Residue cysteine 166 coordinates [2Fe-2S] cluster. Arginine 220 contacts substrate. Lysine 231 carries the post-translational modification N6-succinyllysine. Lysine 252 is modified (N6-acetyllysine; alternate). Lysine 252 carries the N6-succinyllysine; alternate modification. 2 positions are modified to N6-acetyllysine: lysine 279 and lysine 318. At lysine 357 the chain carries N6-(pyridoxal phosphate)lysine. Residue threonine 381 participates in pyridoxal 5'-phosphate binding. Position 413 is an N6-acetyllysine; alternate (lysine 413). Lysine 413 bears the N6-succinyllysine; alternate mark. Lysine 452 and lysine 470 each carry N6-acetyllysine.

Belongs to the class-III pyridoxal-phosphate-dependent aminotransferase family. As to quaternary structure, homodimer; disulfide-linked. Pyridoxal 5'-phosphate is required as a cofactor. It depends on [2Fe-2S] cluster as a cofactor.

Its subcellular location is the mitochondrion matrix. The enzyme catalyses 4-aminobutanoate + 2-oxoglutarate = succinate semialdehyde + L-glutamate. It catalyses the reaction (S)-3-amino-2-methylpropanoate + 2-oxoglutarate = 2-methyl-3-oxopropanoate + L-glutamate. In terms of biological role, catalyzes the conversion of gamma-aminobutyrate and L-beta-aminoisobutyrate to succinate semialdehyde and methylmalonate semialdehyde, respectively. Can also convert delta-aminovalerate and beta-alanine. The polypeptide is 4-aminobutyrate aminotransferase, mitochondrial (ABAT) (Sus scrofa (Pig)).